A 77-amino-acid polypeptide reads, in one-letter code: Serine protease inhibitor 3 (77 aa).

A signal peptide spans 1–17; that stretch reads MMFTPLIVLTLLVLATA. Intrachain disulfides connect cysteine 21/cysteine 53, cysteine 30/cysteine 48, cysteine 33/cysteine 44, and cysteine 55/cysteine 68. A TIL domain is found at 21 to 74; that stretch reads CGPNEQWSGCPKCELQSGESDKPCATICGEPKCYCSPDKYRRIPDGRCIRKIQC.

The protein resides in the secreted. Functionally, defends the organism against the host's proteinases. The chain is Serine protease inhibitor 3 from Anisakis simplex (Herring worm).